Here is a 31-residue protein sequence, read N- to C-terminus: Cytochrome b6-f complex subunit 6 (31 aa).

The chain crosses the membrane as a helical span at residues Val-3 to Ile-23.

The protein belongs to the PetL family. In terms of assembly, the 4 large subunits of the cytochrome b6-f complex are cytochrome b6, subunit IV (17 kDa polypeptide, PetD), cytochrome f and the Rieske protein, while the 4 small subunits are PetG, PetL, PetM and PetN. The complex functions as a dimer.

It is found in the plastid. Its subcellular location is the chloroplast thylakoid membrane. Functionally, component of the cytochrome b6-f complex, which mediates electron transfer between photosystem II (PSII) and photosystem I (PSI), cyclic electron flow around PSI, and state transitions. PetL is important for photoautotrophic growth as well as for electron transfer efficiency and stability of the cytochrome b6-f complex. The sequence is that of Cytochrome b6-f complex subunit 6 from Phaeodactylum tricornutum (strain CCAP 1055/1).